The primary structure comprises 229 residues: MPVFRLSDRLVFPSPHLARHDGLLCLGGDLTPERILLAYQNGIFPWFSPGDPLLWWSPDPRLVILPGQLRVSRSLQKRINRNVYTITMDQAFGRVINACADLRNRSGQGTWLVQEMIEAYIGLHERGYAHSVEAWNAGTLAGGLYGISLGGCFFGESMFSTMADSSKTALAALDRHLVKQKFDLIDCQVKTDHLVSMGGVEIPRKDFLTRIHGSLEKKTIKGPWIFTGF.

The protein belongs to the L/F-transferase family.

It is found in the cytoplasm. It catalyses the reaction N-terminal L-lysyl-[protein] + L-leucyl-tRNA(Leu) = N-terminal L-leucyl-L-lysyl-[protein] + tRNA(Leu) + H(+). The enzyme catalyses N-terminal L-arginyl-[protein] + L-leucyl-tRNA(Leu) = N-terminal L-leucyl-L-arginyl-[protein] + tRNA(Leu) + H(+). The catalysed reaction is L-phenylalanyl-tRNA(Phe) + an N-terminal L-alpha-aminoacyl-[protein] = an N-terminal L-phenylalanyl-L-alpha-aminoacyl-[protein] + tRNA(Phe). In terms of biological role, functions in the N-end rule pathway of protein degradation where it conjugates Leu, Phe and, less efficiently, Met from aminoacyl-tRNAs to the N-termini of proteins containing an N-terminal arginine or lysine. This is Leucyl/phenylalanyl-tRNA--protein transferase from Desulforapulum autotrophicum (strain ATCC 43914 / DSM 3382 / VKM B-1955 / HRM2) (Desulfobacterium autotrophicum).